A 372-amino-acid polypeptide reads, in one-letter code: NAD(P)H-quinone oxidoreductase subunit 1 (372 aa).

Transmembrane regions (helical) follow at residues 27-47, 65-85, 97-117, 128-148, 166-186, 204-224, 266-286, 308-328, and 347-367; these read AIWM…GVLV, PEYI…KLVF, WLFT…YLIV, VGTG…GLLM, AAQS…IVMM, ILGW…IAAL, ILSA…PIPI, ALGI…AILL, and FLLP…LAFP.

It belongs to the complex I subunit 1 family. As to quaternary structure, NDH-1 is composed of at least 11 different subunits.

The protein resides in the cellular thylakoid membrane. It catalyses the reaction a plastoquinone + NADH + (n+1) H(+)(in) = a plastoquinol + NAD(+) + n H(+)(out). The catalysed reaction is a plastoquinone + NADPH + (n+1) H(+)(in) = a plastoquinol + NADP(+) + n H(+)(out). Its function is as follows. NDH-1 shuttles electrons from an unknown electron donor, via FMN and iron-sulfur (Fe-S) centers, to quinones in the respiratory and/or the photosynthetic chain. The immediate electron acceptor for the enzyme in this species is believed to be plastoquinone. Couples the redox reaction to proton translocation, and thus conserves the redox energy in a proton gradient. The protein is NAD(P)H-quinone oxidoreductase subunit 1 of Nostoc sp. (strain PCC 7120 / SAG 25.82 / UTEX 2576).